The chain runs to 143 residues: Large ribosomal subunit protein uL11 (143 aa).

This sequence belongs to the universal ribosomal protein uL11 family. As to quaternary structure, part of the ribosomal stalk of the 50S ribosomal subunit. Interacts with L10 and the large rRNA to form the base of the stalk. L10 forms an elongated spine to which L12 dimers bind in a sequential fashion forming a multimeric L10(L12)X complex. In terms of processing, one or more lysine residues are methylated.

Functionally, forms part of the ribosomal stalk which helps the ribosome interact with GTP-bound translation factors. The protein is Large ribosomal subunit protein uL11 of Methylococcus capsulatus (strain ATCC 33009 / NCIMB 11132 / Bath).